A 194-amino-acid chain; its full sequence is Leucyl/phenylalanyl-tRNA--protein transferase (194 aa).

The protein belongs to the L/F-transferase family.

The protein resides in the cytoplasm. The enzyme catalyses N-terminal L-lysyl-[protein] + L-leucyl-tRNA(Leu) = N-terminal L-leucyl-L-lysyl-[protein] + tRNA(Leu) + H(+). It catalyses the reaction N-terminal L-arginyl-[protein] + L-leucyl-tRNA(Leu) = N-terminal L-leucyl-L-arginyl-[protein] + tRNA(Leu) + H(+). The catalysed reaction is L-phenylalanyl-tRNA(Phe) + an N-terminal L-alpha-aminoacyl-[protein] = an N-terminal L-phenylalanyl-L-alpha-aminoacyl-[protein] + tRNA(Phe). In terms of biological role, functions in the N-end rule pathway of protein degradation where it conjugates Leu, Phe and, less efficiently, Met from aminoacyl-tRNAs to the N-termini of proteins containing an N-terminal arginine or lysine. The chain is Leucyl/phenylalanyl-tRNA--protein transferase from Chlorobaculum tepidum (strain ATCC 49652 / DSM 12025 / NBRC 103806 / TLS) (Chlorobium tepidum).